The chain runs to 299 residues: HTH-type transcriptional regulator CrgA (299 aa).

The 60-residue stretch at 1–60 folds into the HTH lysR-type domain; it reads MKTNSEELTVFVQVVESGSFSRAAEQLAMANSAVSRIVKRLEEKLGVNLLNRTTRQLSLT. Positions 20-39 form a DNA-binding region, H-T-H motif; it reads FSRAAEQLAMANSAVSRIVK.

Belongs to the LysR transcriptional regulatory family. As to quaternary structure, forms oligomers. Oligomerization is required for DNA binding.

Functionally, involved in the regulation of bacterial adhesion to host epithelial cells. May play a central regulatory role in meningococcal adhesion, particularly in switching from initial adhesion to intimate adhesion by downregulating the bacterial surface structures that hinder this adhesion. During intimate adhesion, negatively regulates the expression of pilC1, encoding a pilus-associated protein, pilE, encoding the pilin, and sia genes, encoding the capsule. Also negatively regulates its own expression. May also regulate other genes that are involved in intimate adhesion. Binds specifically to the promoter region of pilC1 and crgA (both harboring a CREN element), and pilE and sia (both devoid of a CREN element). Acts through interaction with RNA polymerase (RNAP). Interaction with RNAP leads to the production of short abortive transcripts, suggesting that CrgA may act by preventing RNAP from clearing the promoter. This chain is HTH-type transcriptional regulator CrgA, found in Neisseria meningitidis serogroup C (strain 8013).